Here is a 548-residue protein sequence, read N- to C-terminus: Chaperonin GroEL (548 aa).

ATP-binding positions include 30–33 (TLGP), Lys-51, 87–91 (DGTTT), Gly-415, 479–481 (NAA), and Asp-495.

Belongs to the chaperonin (HSP60) family. In terms of assembly, forms a cylinder of 14 subunits composed of two heptameric rings stacked back-to-back. Interacts with the co-chaperonin GroES.

The protein localises to the cytoplasm. The catalysed reaction is ATP + H2O + a folded polypeptide = ADP + phosphate + an unfolded polypeptide.. Functionally, together with its co-chaperonin GroES, plays an essential role in assisting protein folding. The GroEL-GroES system forms a nano-cage that allows encapsulation of the non-native substrate proteins and provides a physical environment optimized to promote and accelerate protein folding. In Serratia proteamaculans (strain 568), this protein is Chaperonin GroEL.